We begin with the raw amino-acid sequence, 488 residues long: Ribulose bisphosphate carboxylase large chain 2 (488 aa).

Residues Asn-128 and Thr-178 each coordinate substrate. The Proton acceptor role is filled by Lys-180. Residue Lys-182 coordinates substrate. 3 residues coordinate Mg(2+): Lys-206, Asp-208, and Glu-209. N6-carboxylysine is present on Lys-206. The active-site Proton acceptor is His-298. Substrate contacts are provided by Arg-299, His-331, and Ser-383.

This sequence belongs to the RuBisCO large chain family. Type I subfamily. In terms of assembly, heterohexadecamer of 8 large chains and 8 small chains. Mg(2+) serves as cofactor.

It catalyses the reaction 2 (2R)-3-phosphoglycerate + 2 H(+) = D-ribulose 1,5-bisphosphate + CO2 + H2O. It carries out the reaction D-ribulose 1,5-bisphosphate + O2 = 2-phosphoglycolate + (2R)-3-phosphoglycerate + 2 H(+). RuBisCO catalyzes two reactions: the carboxylation of D-ribulose 1,5-bisphosphate, the primary event in carbon dioxide fixation, as well as the oxidative fragmentation of the pentose substrate. Both reactions occur simultaneously and in competition at the same active site. The sequence is that of Ribulose bisphosphate carboxylase large chain 2 from Nitrobacter hamburgensis (strain DSM 10229 / NCIMB 13809 / X14).